The sequence spans 183 residues: Ly6/PLAUR domain-containing protein 6B (183 aa).

Positions Met1–Ala39 are cleaved as a signal peptide. Residues Phe60–Ala151 enclose the UPAR/Ly6 domain. Residues Phe60–Ala154 form a sufficient for inhibiting alpha-7 nAChR currents region. Cystine bridges form between Cys62–Cys90, Cys65–Cys74, Cys83–Cys109, Cys115–Cys134, Cys120–Cys131, and Cys135–Cys140. Ser164 is lipidated: GPI-anchor amidated serine. A propeptide spans Ser165 to Leu183 (removed in mature form).

It localises to the cell membrane. Functionally, likely acts as a modulator of nicotinic acetylcholine receptors (nAChRs) activity. In vitro acts on nAChRs in a subtype- and stoichiometry-dependent manner. Modulates specifically alpha-3(3):beta-4(2) nAChRs by enhancing the sensitivity to ACh, decreasing ACh-induced maximal current response and increasing the rate of desensitization to ACh; has no effect on alpha-7 homomeric nAChRs; modulates alpha-3(2):alpha-5:beta-4(2) nAChRs in the context of CHRNA5/alpha-5 variant Asn-398 but not its wild-type sequence. However, according to another report in vitro it can weakly inhibits alpha-7 nAChRs. The chain is Ly6/PLAUR domain-containing protein 6B (LYPD6B) from Homo sapiens (Human).